The primary structure comprises 526 residues: Probable feruloyl esterase B-1 (526 aa).

An N-terminal signal peptide occupies residues 1 to 19 (MPSLRRLLPFLAAGSAALA). Intrachain disulfides connect Cys-28–Cys-75 and Cys-63–Cys-114. Asn-53, Asn-85, Asn-98, and Asn-138 each carry an N-linked (GlcNAc...) asparagine glycan. Intrachain disulfides connect Cys-187–Cys-441, Cys-256–Cys-273, and Cys-282–Cys-291. Catalysis depends on Ser-188, which acts as the Acyl-ester intermediate. Asn-246 is a glycosylation site (N-linked (GlcNAc...) asparagine). Residues Asp-257, Asp-260, Ala-262, Asp-264, and Ile-266 each contribute to the Ca(2+) site. Asn-287 and Asn-311 each carry an N-linked (GlcNAc...) asparagine glycan. Catalysis depends on charge relay system residues Asp-400 and His-440. N-linked (GlcNAc...) asparagine glycans are attached at residues Asn-490 and Asn-516. Residues Cys-503 and Cys-525 are joined by a disulfide bond.

This sequence belongs to the tannase family.

The protein resides in the secreted. The enzyme catalyses feruloyl-polysaccharide + H2O = ferulate + polysaccharide.. Functionally, involved in degradation of plant cell walls. Hydrolyzes the feruloyl-arabinose ester bond in arabinoxylans as well as the feruloyl-galactose and feruloyl-arabinose ester bonds in pectin. The sequence is that of Probable feruloyl esterase B-1 (faeB-1) from Aspergillus flavus (strain ATCC 200026 / FGSC A1120 / IAM 13836 / NRRL 3357 / JCM 12722 / SRRC 167).